Consider the following 384-residue polypeptide: S-adenosylmethionine synthase (384 aa).

H15 lines the ATP pocket. Residue D17 participates in Mg(2+) binding. E43 lines the K(+) pocket. L-methionine contacts are provided by E56 and Q99. Residues 99–109 (QSPDINQGVDR) form a flexible loop region. Residues 164-166 (DAK), 230-231 (RF), D239, 245-246 (RK), A262, and K266 contribute to the ATP site. Residue D239 participates in L-methionine binding. K270 is an L-methionine binding site.

It belongs to the AdoMet synthase family. As to quaternary structure, homotetramer; dimer of dimers. Requires Mg(2+) as cofactor. K(+) is required as a cofactor.

Its subcellular location is the cytoplasm. It catalyses the reaction L-methionine + ATP + H2O = S-adenosyl-L-methionine + phosphate + diphosphate. Its pathway is amino-acid biosynthesis; S-adenosyl-L-methionine biosynthesis; S-adenosyl-L-methionine from L-methionine: step 1/1. Catalyzes the formation of S-adenosylmethionine (AdoMet) from methionine and ATP. The overall synthetic reaction is composed of two sequential steps, AdoMet formation and the subsequent tripolyphosphate hydrolysis which occurs prior to release of AdoMet from the enzyme. The sequence is that of S-adenosylmethionine synthase from Yersinia pseudotuberculosis serotype IB (strain PB1/+).